The sequence spans 359 residues: sn-1 linoleoyl-lipid 6-desaturase (359 aa).

2 consecutive transmembrane segments (helical) span residues 45-65 (LIIVLWLFSAWAFVLFAPVIF) and 69-89 (LLGCMVLAIALAAFSFNVGHD). The short motif at 88 to 92 (HDANH) is the Histidine box-1 element. Positions 123–128 (HNYLHH) match the Histidine box-2 motif. A run of 3 helical transmembrane segments spans residues 165–185 (IWGLYLFIPFYWFLYDVYLVL), 206–226 (LLGIKLLWLGYVFGLPLALGF), and 231–251 (VLIGASVTYMTYGIVVCTIFM). The Histidine box-3 signature appears at 306–310 (HHLFP).

Belongs to the fatty acid desaturase type 2 family. The cofactor is Fe(2+).

It is found in the membrane. It catalyses the reaction a 1-[(9Z,12Z)-octadecdienoyl]-2-acyl-glycerolipid + 2 reduced [2Fe-2S]-[ferredoxin] + O2 + 2 H(+) = a 1-[(6Z,9Z,12Z)-octadectrienoyl]-2-acyl-glycerolipid + 2 oxidized [2Fe-2S]-[ferredoxin] + 2 H2O. It functions in the pathway lipid metabolism; polyunsaturated fatty acid biosynthesis. In terms of biological role, desaturase involved in fatty acid biosynthesis. Introduces a double bond at carbon 6 of linoleoyl group (18:2) attached to the sn-1 position of the glycerol moiety of membrane glycerolipids, leading to the formation of gamma-linolenic acid (GLA). In Synechocystis sp. (strain ATCC 27184 / PCC 6803 / Kazusa), this protein is sn-1 linoleoyl-lipid 6-desaturase.